Consider the following 422-residue polypeptide: F-box protein At3g12350 (422 aa).

One can recognise an F-box domain in the interval 5–52; the sequence is ALPFCEIPEDLQLRILSLLTPAEISSFACTSKRFASLCQEDGKIWHVM. 2 stretches are compositionally biased toward basic and acidic residues: residues 197 to 207 and 242 to 252; these read NNRREDQRSSG and KEKERQASRTK. 2 disordered regions span residues 197–216 and 226–252; these read NNRR…LISS and LANK…SRTK.

This chain is F-box protein At3g12350, found in Arabidopsis thaliana (Mouse-ear cress).